We begin with the raw amino-acid sequence, 393 residues long: Sedoheptulose-1,7-bisphosphatase, chloroplastic (393 aa).

A disulfide bridge links C115 with C120. Residues D126, E155, D176, L178, and D179 each contribute to the Mg(2+) site. Substrate-binding positions include 179–182 (DGSS), Y290, and K320. E326 is a binding site for Mg(2+).

This sequence belongs to the FBPase class 1 family. Homodimer. Mg(2+) is required as a cofactor.

It is found in the plastid. It localises to the chloroplast. The catalysed reaction is D-sedoheptulose 1,7-bisphosphate + H2O = D-sedoheptulose 7-phosphate + phosphate. The protein operates within carbohydrate biosynthesis; Calvin cycle. In Triticum aestivum (Wheat), this protein is Sedoheptulose-1,7-bisphosphatase, chloroplastic.